We begin with the raw amino-acid sequence, 241 residues long: MCATPVSPTPLPSTTPLTLRWRGSEPYEASFEAMRTFTDERTADTPDEIWLVEHPPVFTLGQAGNPAHLLAADSGIPLVKVDRGGQITYHGPGQVVAYLLLDLRRRKLMVRELVTRIEQAVIDTLAAYNLAGERKAGAPGIYVAPGPDVGLHAGAKIAALGLKIRNGCSYHGVSLNVNMDLRPFLAINPCGYAGLETVDMATLGVAAGWDDVARTFAERLTANLDGSPAAVAQPQAGVLTA.

A BPL/LPL catalytic domain is found at 43–228; that stretch reads ADTPDEIWLV…RLTANLDGSP (186 aa). Residues 83 to 90, 159 to 161, and 172 to 174 each bind substrate; these read RGGQITYH, ALG, and GVS. Cys-190 acts as the Acyl-thioester intermediate in catalysis.

Belongs to the LipB family.

The protein resides in the cytoplasm. It carries out the reaction octanoyl-[ACP] + L-lysyl-[protein] = N(6)-octanoyl-L-lysyl-[protein] + holo-[ACP] + H(+). The protein operates within protein modification; protein lipoylation via endogenous pathway; protein N(6)-(lipoyl)lysine from octanoyl-[acyl-carrier-protein]: step 1/2. Catalyzes the transfer of endogenously produced octanoic acid from octanoyl-acyl-carrier-protein onto the lipoyl domains of lipoate-dependent enzymes. Lipoyl-ACP can also act as a substrate although octanoyl-ACP is likely to be the physiological substrate. This is Octanoyltransferase from Paraburkholderia phytofirmans (strain DSM 17436 / LMG 22146 / PsJN) (Burkholderia phytofirmans).